Consider the following 127-residue polypeptide: V-type proton ATPase subunit F (127 aa).

The protein belongs to the V-ATPase F subunit family. As to quaternary structure, V-ATPase is a heteromultimeric enzyme made up of two complexes: the ATP-hydrolytic V1 complex and the proton translocation V0 complex. The V1 complex consists of three catalytic AB heterodimers that form a heterohexamer, three peripheral stalks each consisting of EG heterodimers, one central rotor including subunits D and F, and the regulatory subunits C and H. The proton translocation complex V0 consists of the proton transport subunit a, a ring of proteolipid subunits c9c'', rotary subunit d, subunits e and f, and the accessory subunits VhaAC45 and ATP6AP2.

Functionally, subunit of the V1 complex of vacuolar(H+)-ATPase (V-ATPase), a multisubunit enzyme composed of a peripheral complex (V1) that hydrolyzes ATP and a membrane integral complex (V0) that translocates protons. V-ATPase is responsible for acidifying and maintaining the pH of intracellular compartments and in some cell types, is targeted to the plasma membrane, where it is responsible for acidifying the extracellular environment. The sequence is that of V-type proton ATPase subunit F from Aedes aegypti (Yellowfever mosquito).